We begin with the raw amino-acid sequence, 144 residues long: Superoxide dismutase [Mn] 1 (144 aa).

Mn(2+) is bound by residues His42, Asp124, and His128.

Belongs to the iron/manganese superoxide dismutase family. The cofactor is Mn(2+).

It carries out the reaction 2 superoxide + 2 H(+) = H2O2 + O2. Its function is as follows. Destroys superoxide anion radicals which are normally produced within the cells and which are toxic to biological systems. This chain is Superoxide dismutase [Mn] 1 (sod1), found in Haloferax mediterranei (Halobacterium mediterranei).